Consider the following 397-residue polypeptide: Bifunctional enzyme IspD/IspF (397 aa).

The segment at 1 to 233 (MCAKKYKIAA…KLLFEEPKFR (233 aa)) is 2-C-methyl-D-erythritol 4-phosphate cytidylyltransferase. Residues 233–397 (RVGAGYDIHK…VLLHTNFYWK (165 aa)) are 2-C-methyl-D-erythritol 2,4-cyclodiphosphate synthase. D239 and H241 together coordinate a divalent metal cation. 4-CDP-2-C-methyl-D-erythritol 2-phosphate is bound by residues 239 to 241 (DIH) and 270 to 271 (HS). H278 is a binding site for a divalent metal cation. 4-CDP-2-C-methyl-D-erythritol 2-phosphate contacts are provided by residues 292–294 (DIG), 368–371 (TTAE), Y375, and R378.

The protein in the N-terminal section; belongs to the IspD/TarI cytidylyltransferase family. IspD subfamily. It in the C-terminal section; belongs to the IspF family. A divalent metal cation serves as cofactor.

It catalyses the reaction 2-C-methyl-D-erythritol 4-phosphate + CTP + H(+) = 4-CDP-2-C-methyl-D-erythritol + diphosphate. The catalysed reaction is 4-CDP-2-C-methyl-D-erythritol 2-phosphate = 2-C-methyl-D-erythritol 2,4-cyclic diphosphate + CMP. The protein operates within isoprenoid biosynthesis; isopentenyl diphosphate biosynthesis via DXP pathway; isopentenyl diphosphate from 1-deoxy-D-xylulose 5-phosphate: step 2/6. It functions in the pathway isoprenoid biosynthesis; isopentenyl diphosphate biosynthesis via DXP pathway; isopentenyl diphosphate from 1-deoxy-D-xylulose 5-phosphate: step 4/6. Its function is as follows. Bifunctional enzyme that catalyzes the formation of 4-diphosphocytidyl-2-C-methyl-D-erythritol from CTP and 2-C-methyl-D-erythritol 4-phosphate (MEP) (IspD), and catalyzes the conversion of 4-diphosphocytidyl-2-C-methyl-D-erythritol 2-phosphate (CDP-ME2P) to 2-C-methyl-D-erythritol 2,4-cyclodiphosphate (ME-CPP) with a corresponding release of cytidine 5-monophosphate (CMP) (IspF). This is Bifunctional enzyme IspD/IspF from Wolbachia pipientis wMel.